The primary structure comprises 361 residues: Phospho-N-acetylmuramoyl-pentapeptide-transferase (361 aa).

Transmembrane regions (helical) follow at residues 28–48 (LAAL…IRSL), 73–93 (TMGG…WADL), 97–117 (YIWL…VDDY), 134–154 (FFWQ…TAEL), 168–188 (VAIP…IVGS), 200–220 (GLAI…AYVA), 237–257 (AGEL…FLWF), 264–284 (VFMG…ITVI), 289–309 (IVLV…MIQV), and 338–358 (QVVV…LSTL).

The protein belongs to the glycosyltransferase 4 family. MraY subfamily. Mg(2+) is required as a cofactor.

It localises to the cell inner membrane. The enzyme catalyses UDP-N-acetyl-alpha-D-muramoyl-L-alanyl-gamma-D-glutamyl-meso-2,6-diaminopimeloyl-D-alanyl-D-alanine + di-trans,octa-cis-undecaprenyl phosphate = di-trans,octa-cis-undecaprenyl diphospho-N-acetyl-alpha-D-muramoyl-L-alanyl-D-glutamyl-meso-2,6-diaminopimeloyl-D-alanyl-D-alanine + UMP. It participates in cell wall biogenesis; peptidoglycan biosynthesis. Functionally, catalyzes the initial step of the lipid cycle reactions in the biosynthesis of the cell wall peptidoglycan: transfers peptidoglycan precursor phospho-MurNAc-pentapeptide from UDP-MurNAc-pentapeptide onto the lipid carrier undecaprenyl phosphate, yielding undecaprenyl-pyrophosphoryl-MurNAc-pentapeptide, known as lipid I. This Nitrosomonas eutropha (strain DSM 101675 / C91 / Nm57) protein is Phospho-N-acetylmuramoyl-pentapeptide-transferase.